Reading from the N-terminus, the 56-residue chain is Potassium channel toxin alpha-KTx 9.2 (56 aa).

An N-terminal signal peptide occupies residues 1-28 (MSRLFTLVLIVLAMNVMMAIISDPVVEA). Cystine bridges form between cysteine 31/cysteine 47, cysteine 34/cysteine 52, and cysteine 38/cysteine 54.

In terms of tissue distribution, expressed by the venom gland.

It is found in the secreted. Functionally, blocks small conductance calcium-activated potassium channels (KCNN, SK). Low toxicity by intracerebroventricular injection into mice. The polypeptide is Potassium channel toxin alpha-KTx 9.2 (Olivierus martensii (Manchurian scorpion)).